A 533-amino-acid polypeptide reads, in one-letter code: Peptide chain release factor 3 (533 aa).

The region spanning 11–284 (RRRRTFAIIS…ALVGLSPEPL (274 aa)) is the tr-type G domain. Residues 20-27 (SHPDAGKT), 92-96 (DTPGH), and 146-149 (NKLD) contribute to the GTP site.

Belongs to the TRAFAC class translation factor GTPase superfamily. Classic translation factor GTPase family. PrfC subfamily.

It localises to the cytoplasm. In terms of biological role, increases the formation of ribosomal termination complexes and stimulates activities of RF-1 and RF-2. It binds guanine nucleotides and has strong preference for UGA stop codons. It may interact directly with the ribosome. The stimulation of RF-1 and RF-2 is significantly reduced by GTP and GDP, but not by GMP. This Ralstonia nicotianae (strain ATCC BAA-1114 / GMI1000) (Ralstonia solanacearum) protein is Peptide chain release factor 3.